The sequence spans 863 residues: Leucine--tRNA ligase (863 aa).

Residues 41–51 (PYPSGRIHIGH) carry the 'HIGH' region motif. The 'KMSKS' region signature appears at 627 to 631 (KMSKS). Position 630 (lysine 630) interacts with ATP.

This sequence belongs to the class-I aminoacyl-tRNA synthetase family.

It localises to the cytoplasm. The catalysed reaction is tRNA(Leu) + L-leucine + ATP = L-leucyl-tRNA(Leu) + AMP + diphosphate. The chain is Leucine--tRNA ligase from Jannaschia sp. (strain CCS1).